The primary structure comprises 116 residues: Large ribosomal subunit protein bL19 (116 aa).

It belongs to the bacterial ribosomal protein bL19 family.

Its function is as follows. This protein is located at the 30S-50S ribosomal subunit interface and may play a role in the structure and function of the aminoacyl-tRNA binding site. The chain is Large ribosomal subunit protein bL19 from Chloroflexus aggregans (strain MD-66 / DSM 9485).